An 884-amino-acid polypeptide reads, in one-letter code: Kinesin-like protein KIN-7C (884 aa).

A Kinesin motor domain is found at 33–355 (RIQVLVRLRP…LLFGSCAKEV (323 aa)). 119-126 (GQTSSGKT) serves as a coordination point for ATP. A coiled-coil region spans residues 364–435 (VMSDKALVKH…LQDLLQSVGD (72 aa)). Residues 434–530 (GDHDLNRQVQ…VNSRHSRPSG (97 aa)) form a disordered region. Residues 449–460 (RSPPSVGMPPSV) are compositionally biased toward low complexity. Residues 461-483 (SRDDSSQVSHDDSDLYKEVRCIE) show a composition bias toward basic and acidic residues. Residues 498-523 (GESSSPQDSNMNSGLHGNDSNASVNS) are compositionally biased toward polar residues.

Belongs to the TRAFAC class myosin-kinesin ATPase superfamily. Kinesin family. KIN-7 subfamily.

This chain is Kinesin-like protein KIN-7C, found in Oryza sativa subsp. japonica (Rice).